A 221-amino-acid polypeptide reads, in one-letter code: Pyridoxal phosphate homeostasis protein (221 aa).

Lys26 carries the N6-(pyridoxal phosphate)lysine modification.

This sequence belongs to the pyridoxal phosphate-binding protein YggS/PROSC family.

Pyridoxal 5'-phosphate (PLP)-binding protein, which is involved in PLP homeostasis. In Corynebacterium glutamicum (strain ATCC 13032 / DSM 20300 / JCM 1318 / BCRC 11384 / CCUG 27702 / LMG 3730 / NBRC 12168 / NCIMB 10025 / NRRL B-2784 / 534), this protein is Pyridoxal phosphate homeostasis protein.